Consider the following 289-residue polypeptide: Bifunctional protein FolD (289 aa).

NADP(+)-binding positions include 166–168 (GRS), Ser-191, and Ile-232.

Belongs to the tetrahydrofolate dehydrogenase/cyclohydrolase family. Homodimer.

It catalyses the reaction (6R)-5,10-methylene-5,6,7,8-tetrahydrofolate + NADP(+) = (6R)-5,10-methenyltetrahydrofolate + NADPH. The enzyme catalyses (6R)-5,10-methenyltetrahydrofolate + H2O = (6R)-10-formyltetrahydrofolate + H(+). The protein operates within one-carbon metabolism; tetrahydrofolate interconversion. Functionally, catalyzes the oxidation of 5,10-methylenetetrahydrofolate to 5,10-methenyltetrahydrofolate and then the hydrolysis of 5,10-methenyltetrahydrofolate to 10-formyltetrahydrofolate. This chain is Bifunctional protein FolD, found in Synechococcus sp. (strain JA-3-3Ab) (Cyanobacteria bacterium Yellowstone A-Prime).